We begin with the raw amino-acid sequence, 51 residues long: Structural protein ORF5a (51 aa).

A helical membrane pass occupies residues 11 to 28; the sequence is RGLLLAIAFFVVYRAVLF.

The protein belongs to the arteriviridae ORF5a protein family. As to quaternary structure, interacts with GP2b and GP4.

Its subcellular location is the virion. The protein resides in the host cell membrane. Minor virion component that plays an essential role in virus infectivity. The polypeptide is Structural protein ORF5a (Porcine reproductive and respiratory syndrome virus (strain VR-2332) (PRRSV)).